We begin with the raw amino-acid sequence, 379 residues long: Homoserine O-acetyltransferase (379 aa).

The 305-residue stretch at 52–356 (NVVVVLHALT…VYGHDGFLVE (305 aa)) folds into the AB hydrolase-1 domain. Residue Ser157 is the Nucleophile of the active site. Arg227 provides a ligand contact to substrate. Active-site residues include Asp320 and His350. Asp351 contacts substrate.

It belongs to the AB hydrolase superfamily. MetX family. As to quaternary structure, homodimer.

The protein resides in the cytoplasm. The catalysed reaction is L-homoserine + acetyl-CoA = O-acetyl-L-homoserine + CoA. Its pathway is amino-acid biosynthesis; L-methionine biosynthesis via de novo pathway; O-acetyl-L-homoserine from L-homoserine: step 1/1. Functionally, transfers an acetyl group from acetyl-CoA to L-homoserine, forming acetyl-L-homoserine. In Mycobacterium bovis (strain ATCC BAA-935 / AF2122/97), this protein is Homoserine O-acetyltransferase.